The chain runs to 100 residues: Urease subunit gamma (100 aa).

Belongs to the urease gamma subunit family. As to quaternary structure, heterotrimer of UreA (gamma), UreB (beta) and UreC (alpha) subunits. Three heterotrimers associate to form the active enzyme.

It is found in the cytoplasm. The catalysed reaction is urea + 2 H2O + H(+) = hydrogencarbonate + 2 NH4(+). Its pathway is nitrogen metabolism; urea degradation; CO(2) and NH(3) from urea (urease route): step 1/1. This Roseobacter denitrificans (strain ATCC 33942 / OCh 114) (Erythrobacter sp. (strain OCh 114)) protein is Urease subunit gamma.